The primary structure comprises 174 residues: Pediocin PA-1 biosynthesis protein PedC (174 aa).

Functionally, probably involved in pediocin PA-1 biosynthesis. This is Pediocin PA-1 biosynthesis protein PedC (pedC) from Pediococcus acidilactici.